The following is a 222-amino-acid chain: Ribose-5-phosphate isomerase A (222 aa).

Substrate contacts are provided by residues 28-31 (TGST), 81-84 (DGAD), and 94-97 (KGGG). Glu103 acts as the Proton acceptor in catalysis. Position 121 (Lys121) interacts with substrate.

Belongs to the ribose 5-phosphate isomerase family. Homodimer.

It carries out the reaction aldehydo-D-ribose 5-phosphate = D-ribulose 5-phosphate. Its pathway is carbohydrate degradation; pentose phosphate pathway; D-ribose 5-phosphate from D-ribulose 5-phosphate (non-oxidative stage): step 1/1. Catalyzes the reversible conversion of ribose-5-phosphate to ribulose 5-phosphate. In Azoarcus sp. (strain BH72), this protein is Ribose-5-phosphate isomerase A.